The sequence spans 52 residues: uncharacterized protein (52 aa).

Helical transmembrane passes span 4-24 (IIIP…ISLE) and 25-45 (MSIV…FLFV).

The protein resides in the cell membrane. This is an uncharacterized protein from Bacillus subtilis (strain 168).